The primary structure comprises 346 residues: NADH-ubiquinone oxidoreductase chain 2 (346 aa).

A run of 11 helical transmembrane segments spans residues 1-21, 25-45, 60-80, 96-116, 124-144, 149-169, 178-198, 200-220, 242-262, 274-294, and 325-345; these read MNPHAKLISLISLLLGTTITI, HWIMAWTGLEINTLAIIPLIS, FLVQAAASALVLFSSMSNAWA, MLLTAAIAIKLGLVPFHFWFP, LTTALLLSTLMKLPPMAILLM, LNPTVLTSMALASAALGGWMG, ILAFSSIAHLGWMTMIIIYNP, LTLLTFYLYILMTATVFLSLN, AALMLTLLSLAGLPPLTGFMP, EMTTVATIIALLSLLGLFFYL, and IAILSSLSAILLPISPMILAA.

The protein belongs to the complex I subunit 2 family.

It localises to the mitochondrion inner membrane. It catalyses the reaction a ubiquinone + NADH + 5 H(+)(in) = a ubiquinol + NAD(+) + 4 H(+)(out). In terms of biological role, core subunit of the mitochondrial membrane respiratory chain NADH dehydrogenase (Complex I) that is believed to belong to the minimal assembly required for catalysis. Complex I functions in the transfer of electrons from NADH to the respiratory chain. The immediate electron acceptor for the enzyme is believed to be ubiquinone. This is NADH-ubiquinone oxidoreductase chain 2 (MT-ND2) from Struthio camelus (Common ostrich).